The primary structure comprises 668 residues: MNIQETIQTLREELNQHNYNYYVLDNATISDYDFDIKLKELQDLENKHPEFFDEDSPTQRVGGTVTKNFKTIAHQYRMYSLDNSYSKEDLIDWENRIQRVLGNVNLQYTCELKYDGASISISYQNGKLVQALTRGDGFQGDEVTNNIKTIKSIPLKLKGDYPERFDIRGEIILPFAGFEKMNQELIEIGETPYSNPRNTASGSLKLQDSAEVAKRPLECLLYTVAGNNLPFKTQFEGLESARKWGFKVPNEAKLVNSMQEVFDFIDYWDVHRHKLPYETDGVVIKVNSIHSQEELGYTAKSPRWAIAYKFKSEQASTKLKSISYQVGRTGAITPVANLEPVQLAGTIVKRASLHNADQIEKLDIRINDTVFVEKGGEIIPKIIAVDLEKRPENSEVTQYITHCPECETELVRNAGEANHYCPNFYGCPPQIIGRIQHYISRKAMDIEGLGGETVALLFKNGLVHNYADLYELKVEDILHLERMAQKSAENLVNGVEKSKEIPFESVLFALGIRFVGETVAKKLAKHYKNIDALSQASLMDLILVDEIGERIARSVIEFFENEENKIIIERLKKYGIQFETVERVNPNATEKFIGKTFVVSGVFSQFSRDELKKAIEDNGGKVGSSISAKTDFVVAGDNMGPAKLEKATKLNIPILSEDEFITKLNESE.

Residues 31-35 (DYDFD), 80-81 (SL), and Glu111 contribute to the NAD(+) site. Lys113 functions as the N6-AMP-lysine intermediate in the catalytic mechanism. Residues Arg134, Glu170, Lys285, and Lys309 each coordinate NAD(+). 4 residues coordinate Zn(2+): Cys403, Cys406, Cys421, and Cys427. The BRCT domain maps to 587–668 (NATEKFIGKT…EFITKLNESE (82 aa)).

This sequence belongs to the NAD-dependent DNA ligase family. LigA subfamily. It depends on Mg(2+) as a cofactor. Mn(2+) serves as cofactor.

It catalyses the reaction NAD(+) + (deoxyribonucleotide)n-3'-hydroxyl + 5'-phospho-(deoxyribonucleotide)m = (deoxyribonucleotide)n+m + AMP + beta-nicotinamide D-nucleotide.. Its function is as follows. DNA ligase that catalyzes the formation of phosphodiester linkages between 5'-phosphoryl and 3'-hydroxyl groups in double-stranded DNA using NAD as a coenzyme and as the energy source for the reaction. It is essential for DNA replication and repair of damaged DNA. The chain is DNA ligase from Flavobacterium johnsoniae (strain ATCC 17061 / DSM 2064 / JCM 8514 / BCRC 14874 / CCUG 350202 / NBRC 14942 / NCIMB 11054 / UW101) (Cytophaga johnsonae).